The sequence spans 344 residues: N-acetyl-gamma-glutamyl-phosphate reductase (344 aa).

C150 is an active-site residue.

Belongs to the NAGSA dehydrogenase family. Type 1 subfamily.

Its subcellular location is the cytoplasm. The enzyme catalyses N-acetyl-L-glutamate 5-semialdehyde + phosphate + NADP(+) = N-acetyl-L-glutamyl 5-phosphate + NADPH + H(+). Its pathway is amino-acid biosynthesis; L-arginine biosynthesis; N(2)-acetyl-L-ornithine from L-glutamate: step 3/4. Catalyzes the NADPH-dependent reduction of N-acetyl-5-glutamyl phosphate to yield N-acetyl-L-glutamate 5-semialdehyde. This Pseudomonas syringae pv. syringae (strain B728a) protein is N-acetyl-gamma-glutamyl-phosphate reductase.